The primary structure comprises 378 residues: Beta sliding clamp (378 aa).

Belongs to the beta sliding clamp family. Forms a ring-shaped head-to-tail homodimer around DNA which binds and tethers DNA polymerases and other proteins to the DNA. The DNA replisome complex has a single clamp-loading complex (3 tau and 1 each of delta, delta', psi and chi subunits) which binds 3 Pol III cores (1 core on the leading strand and 2 on the lagging strand) each with a beta sliding clamp dimer. Additional proteins in the replisome are other copies of gamma, psi and chi, Ssb, DNA helicase and RNA primase.

The protein localises to the cytoplasm. Confers DNA tethering and processivity to DNA polymerases and other proteins. Acts as a clamp, forming a ring around DNA (a reaction catalyzed by the clamp-loading complex) which diffuses in an ATP-independent manner freely and bidirectionally along dsDNA. Initially characterized for its ability to contact the catalytic subunit of DNA polymerase III (Pol III), a complex, multichain enzyme responsible for most of the replicative synthesis in bacteria; Pol III exhibits 3'-5' exonuclease proofreading activity. The beta chain is required for initiation of replication as well as for processivity of DNA replication. The chain is Beta sliding clamp (dnaN) from Streptococcus pneumoniae (strain ATCC BAA-255 / R6).